Here is a 176-residue protein sequence, read N- to C-terminus: MIDDDGYRPNVGIVICNRQGQVMWARRFGQHSWQFPQGGINPGESAEQAMYRELFEEVGLSRKDVRILASTRNWLRYKLPKRLVRWDTKPVCIGQKQKWFLLQLVSGDAEIHMPTSSTPEFDGWRWVSYWYPVRQVVSFKRDVYRRVMKEFASVVMSLQENTPKPQNTSAYRRKRG.

The 144-residue stretch at 6-149 (GYRPNVGIVI…KRDVYRRVMK (144 aa)) folds into the Nudix hydrolase domain. The Nudix box motif lies at 38–59 (GGINPGESAEQAMYRELFEEVG).

Belongs to the Nudix hydrolase family. RppH subfamily. Requires a divalent metal cation as cofactor.

Its function is as follows. Accelerates the degradation of transcripts by removing pyrophosphate from the 5'-end of triphosphorylated RNA, leading to a more labile monophosphorylated state that can stimulate subsequent ribonuclease cleavage. The sequence is that of RNA pyrophosphohydrolase from Shigella boydii serotype 4 (strain Sb227).